The chain runs to 126 residues: Protein Wnt-7(II) (126 aa).

Residue Ser-1 is the site of O-palmitoleoyl serine; by PORCN attachment. The cysteines at positions 92 and 107 are disulfide-linked. The N-linked (GlcNAc...) asparagine glycan is linked to Asn-93.

It belongs to the Wnt family. Palmitoleoylation is required for efficient binding to frizzled receptors. Depalmitoleoylation leads to Wnt signaling pathway inhibition.

Its subcellular location is the secreted. It localises to the extracellular space. The protein resides in the extracellular matrix. In terms of biological role, ligand for members of the frizzled family of seven transmembrane receptors. Probable developmental protein. May be a signaling molecule which affects the development of discrete regions of tissues. Is likely to signal over only few cell diameters. The chain is Protein Wnt-7(II) (WNT-7(II)) from Eptatretus stoutii (Pacific hagfish).